Here is a 301-residue protein sequence, read N- to C-terminus: Negative regulator of the PHO system (301 aa).

Positions 7-297 constitute a Protein kinase domain; it reads FKQLERLGNG…AQQALSHPLF (291 aa). ATP-binding positions include 13–21 and lysine 36; that span reads LGNGTYATV. The Proton acceptor role is filled by aspartate 133.

It belongs to the protein kinase superfamily. CMGC Ser/Thr protein kinase family. CDC2/CDKX subfamily. As to quaternary structure, interacts with a number of cyclins.

It catalyses the reaction L-seryl-[protein] + ATP = O-phospho-L-seryl-[protein] + ADP + H(+). The catalysed reaction is L-threonyl-[protein] + ATP = O-phospho-L-threonyl-[protein] + ADP + H(+). Its function is as follows. When phosphate concentrations are high it phosphorylates the PHO4 transcription factor thus establishing repression. The sequence is that of Negative regulator of the PHO system (PHO85) from Eremothecium gossypii (strain ATCC 10895 / CBS 109.51 / FGSC 9923 / NRRL Y-1056) (Yeast).